We begin with the raw amino-acid sequence, 697 residues long: Potassium-transporting ATPase ATP-binding subunit (697 aa).

Transmembrane regions (helical) follow at residues 36-56 (VMFV…RDLI), 66-86 (LQII…EAVA), 218-238 (IALN…TATI), and 253-273 (VLVA…LSAI). Catalysis depends on Asp-306, which acts as the 4-aspartylphosphate intermediate. ATP is bound by residues Asp-343, Glu-347, 376–383 (FTAQTRMS), and Lys-394. Mg(2+) contacts are provided by Asp-526 and Asp-530. The next 3 helical transmembrane spans lie at 595–615 (YFAI…QSTG), 631–651 (AILS…PLSL), and 669–689 (LLVY…IIDM).

The protein belongs to the cation transport ATPase (P-type) (TC 3.A.3) family. Type IA subfamily. The system is composed of three essential subunits: KdpA, KdpB and KdpC.

It is found in the cell inner membrane. It carries out the reaction K(+)(out) + ATP + H2O = K(+)(in) + ADP + phosphate + H(+). Its function is as follows. Part of the high-affinity ATP-driven potassium transport (or Kdp) system, which catalyzes the hydrolysis of ATP coupled with the electrogenic transport of potassium into the cytoplasm. This subunit is responsible for energy coupling to the transport system and for the release of the potassium ions to the cytoplasm. The polypeptide is Potassium-transporting ATPase ATP-binding subunit (Mesorhizobium japonicum (strain LMG 29417 / CECT 9101 / MAFF 303099) (Mesorhizobium loti (strain MAFF 303099))).